The chain runs to 346 residues: SUMO-activating enzyme subunit 1 (346 aa).

At Met1 the chain carries N-acetylmethionine. An N-acetylvaline; in SUMO-activating enzyme subunit 1, N-terminally processed modification is found at Val2. A Phosphoserine modification is found at Ser12. Lys198 carries the N6-acetyllysine modification.

It belongs to the ubiquitin-activating E1 family. In terms of assembly, heterodimer of SAE1 and UBA2/SAE2. The heterodimer corresponds to the two domains that are encoded on a single polypeptide chain in ubiquitin-activating enzyme E1. Interacts with UBE2I. In terms of tissue distribution, expression level increases during S phase and drops in G2 phase (at protein level).

It localises to the nucleus. It functions in the pathway protein modification; protein sumoylation. The heterodimer acts as an E1 ligase for SUMO1, SUMO2, SUMO3, and probably SUMO4. It mediates ATP-dependent activation of SUMO proteins followed by formation of a thioester bond between a SUMO protein and a conserved active site cysteine residue on UBA2/SAE2. This chain is SUMO-activating enzyme subunit 1 (SAE1), found in Homo sapiens (Human).